The sequence spans 380 residues: Crotonobetainyl-CoA reductase (380 aa).

It belongs to the acyl-CoA dehydrogenase family. In terms of assembly, homotetramer. FAD serves as cofactor.

It is found in the cytoplasm. It catalyses the reaction 4-(trimethylamino)butanoyl-CoA + oxidized [electron-transfer flavoprotein] + H(+) = crotonobetainyl-CoA + reduced [electron-transfer flavoprotein]. Its pathway is amine and polyamine metabolism; carnitine metabolism. In terms of biological role, catalyzes the reduction of crotonobetainyl-CoA to gamma-butyrobetainyl-CoA. This is Crotonobetainyl-CoA reductase from Proteus sp. (strain LE138).